A 345-amino-acid chain; its full sequence is NADPH-dependent oxidoreductase 2-alkenal reductase (345 aa).

Residues 52 to 53 (PY), 163 to 169 (AASGAVG), glycine 188, lysine 192, tyrosine 208, asparagine 232, cysteine 254, tyrosine 260, 284 to 286 (FVV), phenylalanine 330, and 334 to 336 (NVG) contribute to the NADP(+) site. Tyrosine 53 contributes to the substrate binding site. Tyrosine 260 is a binding site for substrate.

It belongs to the NADP-dependent oxidoreductase L4BD family. As to quaternary structure, homodimer. As to expression, expressed in leaves.

It localises to the cytoplasm. The protein resides in the nucleus. The protein localises to the nucleoplasm. The catalysed reaction is an n-alkanal + NAD(+) = an alk-2-enal + NADH + H(+). It catalyses the reaction an n-alkanal + NADP(+) = an alk-2-enal + NADPH + H(+). Inhibited by N-ethylmaleimide and p-chloromercuribenzoic acid. Involved in the detoxification of reactive carbonyls. Acts on lipid peroxide-derived reactive aldehydes. Specific to a double bond activated by an adjacent carbonyl group. Can use both quinones and diamide as substrates, but not menadione, ferricyanide or phylloquinone. Can use 4-hydroxy-(2E)-nonenal (HNE), 4-hydroxy-(2E)-hexenal (HHE), (2E)-nonenal, (2E)-hexenal, (2E)-pentenal, propenal (acrolein), 3-buten-2-one and 3-penten-2-one, but not (R)-(-)-carvone, n-nonanal, n-hexanal, (3Z)-hexanal, cyclohex-2-en-1-one or 12-oxo phytodienoic acid (OPDA) as electron acceptors. Catalyzes the reduction of the alpha,beta-unsaturated bond of 2-alkenals, of lipid peroxide-derived oxenes 9-oxo-10(E),12(Z)-octadecadienoic acid (9-KODE) and 13-oxo-9(Z),11(E)-octadecadienoic acid (13-KODE), as well as 4-oxo-(2E)-nonenal and 4-hydroxynonenal. Can use 12-oxo-10(E) dodecanoate (traumatin), trans-1,3 diphenyl-2-propenone, trans-1,4-diphenyl-2-butene-1,4-dione, 9-oxo-12,13-epoxy-(10E)-octadecenoic acid (trans-EKODE-1b) and 9,13-dihydroxy-10-oxo-11-octadecenoic acid as substrates. Catalyzes the reduction of the 7-8 double bond of phenylpropanal substrates, such as p-coumaryl aldehyde and coniferyl aldehyde (in vitro). Has activity towards toxic substrates, such as 4-hydroxy-(2E)-nonenal (in vitro). May play a distinct role in plant antioxidant defense and is possibly involved in NAD(P)/NAD(P)H homeostasis. The protein is NADPH-dependent oxidoreductase 2-alkenal reductase of Arabidopsis thaliana (Mouse-ear cress).